A 22-amino-acid chain; its full sequence is 65 kDa membrane protein (22 aa).

The interval Ala-1 to Pro-22 is disordered.

The protein localises to the cell membrane. Functionally, binds various plasma and ECM-proteins. The sequence is that of 65 kDa membrane protein from Staphylococcus aureus.